The primary structure comprises 220 residues: Pyrrolidone-carboxylate peptidase (220 aa).

Active-site residues include Glu-80, Cys-143, and His-167.

The protein belongs to the peptidase C15 family. As to quaternary structure, homotetramer.

Its subcellular location is the cytoplasm. It carries out the reaction Release of an N-terminal pyroglutamyl group from a polypeptide, the second amino acid generally not being Pro.. Removes 5-oxoproline from various penultimate amino acid residues except L-proline. The sequence is that of Pyrrolidone-carboxylate peptidase (pcp) from Thermococcus litoralis (strain ATCC 51850 / DSM 5473 / JCM 8560 / NS-C).